Here is a 227-residue protein sequence, read N- to C-terminus: Sensory transduction protein RegX3 (227 aa).

Positions 3-116 (SVLIVEDEES…ELIARIRAVL (114 aa)) constitute a Response regulatory domain. The residue at position 52 (D52) is a 4-aspartylphosphate. The ompR/PhoB-type DNA-binding region spans 128–227 (DGVLESGPVR…VRGLGYKLEG (100 aa)).

Post-translationally, phosphorylated by SenX3.

Its function is as follows. Member of the two-component regulatory system SenX3/RegX3. Specifically binds to the promoter region of the senX3-regX3 operon. The protein is Sensory transduction protein RegX3 of Mycobacterium bovis (strain ATCC BAA-935 / AF2122/97).